The primary structure comprises 99 residues: SAGA-associated factor 11 (99 aa).

An SGF11-type zinc finger spans residues 71–92 (IHCENCGRDVSANRLAAHLQRC).

Belongs to the SGF11 family. As to quaternary structure, component of the 1.8 MDa SAGA transcription coactivator-HAT complex. SAGA is built of 5 distinct domains with specialized functions. Within the SAGA complex, SUS1, SGF11, SGF73 and UBP8 form an additional subcomplex of SAGA called the DUB module (deubiquitination module). Interacts directly with SGF73, SUS1 and UBP8.

The protein localises to the nucleus. Functions as a component of the transcription regulatory histone acetylation (HAT) complex SAGA. At the promoters, SAGA is required for recruitment of the basal transcription machinery. It influences RNA polymerase II transcriptional activity through different activities such as TBP interaction and promoter selectivity, interaction with transcription activators, and chromatin modification through histone acetylation and deubiquitination. SAGA acetylates nucleosomal histone H3 to some extent (to form H3K9ac, H3K14ac, H3K18ac and H3K23ac). SAGA interacts with DNA via upstream activating sequences (UASs). Involved in transcriptional regulation of a subset of SAGA-regulated genes. Within the SAGA complex, participates in a subcomplex, that specifically deubiquitinates histones H2B. The protein is SAGA-associated factor 11 of Saccharomyces cerevisiae (strain RM11-1a) (Baker's yeast).